The sequence spans 188 residues: MPKASELKKGFAIISNGKTLLIKDIEVTTPGGRGGSKIYKLRCTDLNTGARVDERYKSDDVLDTVEMNKRPISFSYIDGDEYVFMNNDDYTPYNFKKDEIEDELLFITEEIQGMSVVLVDGEAVAIELPSSVEMVIEETDPSIKGASASSRTKPARMPTGLVVQVPEYIATGDRIVINTAERKFMNRA.

It belongs to the elongation factor P family.

In Vibrio cholerae serotype O1 (strain ATCC 39541 / Classical Ogawa 395 / O395), this protein is Elongation factor P-like protein.